A 617-amino-acid chain; its full sequence is MPRIPTSVLGKYLLSGQISRQGCVGARQITRHSALPSAAVSVANSARLLHVSSETVPPPPAQPVPLRKQLKDEAKKAKKQGKKKSKGDSQTVDGWELTVGIEIHAQLNTARKLFSPAVTSFNDEPNSHVALFDLSMPGSQPLFQKETLIPALRAALALNCDIQKLSRFDRKHYFWWDQPSGYQITQYYEPFARNGHITLLARDGISPQDGESVTIGIKQVQLEQDTAKTLAQADKVNWLDFNRVGVPLIEIITEPEMHHPRTAAVLVRKIQMLLNTVDACVSGMETGGLRADVNVSVRRTDGSNPSLGTRTEIKNLSTIKAVEDAIIAERDRQISELEAGRAIPSETRGWTLGSNETRRLRGKEGEVDYRYMPDPDIAPLVIGDDLVDHLRRSLAVSPDSELDTLIARYGLTAKDALSLINLENGSRVQYFYKVLKSVEEKLAAELTEEEMPEFKSYSTLVGNWIIHELGRLTTFKAGPLAARDLSFTPEGDCLQVPDADLAQLLYHLVRKQITGKVAKELLFAIYLNEIEGGITQAIEDNDLWFKEIPEEEYEKLADEVMEGEDKVLQEFVDYKQFPQGKLMYLVGKMMRLGPTERIVPANAERVMRAKVEKLRSE.

A mitochondrion-targeting transit peptide spans 1–56 (MPRIPTSVLGKYLLSGQISRQGCVGARQITRHSALPSAAVSVANSARLLHVSSETV). Positions 53-90 (SETVPPPPAQPVPLRKQLKDEAKKAKKQGKKKSKGDSQ) are disordered. A compositionally biased stretch (basic residues) spans 76 to 85 (KAKKQGKKKS).

It belongs to the GatB/GatE family. GatB subfamily. As to quaternary structure, subunit of the heterotrimeric GatCAB amidotransferase (AdT) complex, composed of A, B and C subunits.

The protein localises to the mitochondrion. It catalyses the reaction L-glutamyl-tRNA(Gln) + L-glutamine + ATP + H2O = L-glutaminyl-tRNA(Gln) + L-glutamate + ADP + phosphate + H(+). In terms of biological role, allows the formation of correctly charged Gln-tRNA(Gln) through the transamidation of misacylated Glu-tRNA(Gln) in the mitochondria. The reaction takes place in the presence of glutamine and ATP through an activated gamma-phospho-Glu-tRNA(Gln). This Fusarium vanettenii (strain ATCC MYA-4622 / CBS 123669 / FGSC 9596 / NRRL 45880 / 77-13-4) (Fusarium solani subsp. pisi) protein is Glutamyl-tRNA(Gln) amidotransferase subunit B, mitochondrial.